We begin with the raw amino-acid sequence, 128 residues long: Large ribosomal subunit protein bL12 (128 aa).

It belongs to the bacterial ribosomal protein bL12 family. As to quaternary structure, homodimer. Part of the ribosomal stalk of the 50S ribosomal subunit. Forms a multimeric L10(L12)X complex, where L10 forms an elongated spine to which 2 to 4 L12 dimers bind in a sequential fashion. Binds GTP-bound translation factors.

Forms part of the ribosomal stalk which helps the ribosome interact with GTP-bound translation factors. Is thus essential for accurate translation. The protein is Large ribosomal subunit protein bL12 of Thermosipho africanus (strain TCF52B).